The primary structure comprises 914 residues: Linoleate 13S-lipoxygenase 3-1, chloroplastic (914 aa).

The transit peptide at 1–83 directs the protein to the chloroplast; it reads MALAKEIMGI…PEKAVRFKVR (83 aa). Residues 96-218 enclose the PLAT domain; that stretch reads LKETIVKHLD…DHPGKRIFFS (123 aa). A Lipoxygenase domain is found at 221–914; the sequence is PYLPDETPAG…CRGVPNSVSI (694 aa). Fe cation is bound by residues His-574, His-579, His-765, Asn-769, and Ile-914.

Belongs to the lipoxygenase family. As to quaternary structure, monomer. Requires Fe cation as cofactor. Expressed in roots and leaves. Detected in tubers and flower buds.

It localises to the plastid. The protein localises to the chloroplast stroma. The protein resides in the chloroplast thylakoid. The catalysed reaction is (9Z,12Z)-octadecadienoate + O2 = (13S)-hydroperoxy-(9Z,11E)-octadecadienoate. The enzyme catalyses (9Z,12Z,15Z)-octadecatrienoate + O2 = (13S)-hydroperoxy-(9Z,11E,15Z)-octadecatrienoate. It participates in lipid metabolism; oxylipin biosynthesis. Its function is as follows. Plant lipoxygenases may be involved in a number of diverse aspects of plant physiology including growth and development, pest resistance, and senescence or responses to wounding. Required for the regulation of wound-induced gene expression, but is not involved in the bulk production of jasmonate upon wounding. Catalyzes the hydroperoxidation of lipids containing a cis,cis-1,4-pentadiene structure. Linolenic acid is the preferred substrate, before linoleic and arachidonic acids. This is Linoleate 13S-lipoxygenase 3-1, chloroplastic (LOX3.1) from Solanum tuberosum (Potato).